A 410-amino-acid chain; its full sequence is LL-diaminopimelate aminotransferase (410 aa).

Substrate-binding residues include Tyr15 and Gly42. Pyridoxal 5'-phosphate is bound by residues Tyr72, 108 to 109 (TK), Tyr132, Asn186, Tyr217, and 245 to 247 (SFS). 3 residues coordinate substrate: Lys109, Tyr132, and Asn186. Lys248 is modified (N6-(pyridoxal phosphate)lysine). Arg256 and Asn291 together coordinate pyridoxal 5'-phosphate. Substrate is bound by residues Asn291 and Arg387.

It belongs to the class-I pyridoxal-phosphate-dependent aminotransferase family. LL-diaminopimelate aminotransferase subfamily. As to quaternary structure, homodimer. Requires pyridoxal 5'-phosphate as cofactor.

The catalysed reaction is (2S,6S)-2,6-diaminopimelate + 2-oxoglutarate = (S)-2,3,4,5-tetrahydrodipicolinate + L-glutamate + H2O + H(+). It participates in amino-acid biosynthesis; L-lysine biosynthesis via DAP pathway; LL-2,6-diaminopimelate from (S)-tetrahydrodipicolinate (aminotransferase route): step 1/1. In terms of biological role, involved in the synthesis of meso-diaminopimelate (m-DAP or DL-DAP), required for both lysine and peptidoglycan biosynthesis. Catalyzes the direct conversion of tetrahydrodipicolinate to LL-diaminopimelate. This chain is LL-diaminopimelate aminotransferase, found in Lawsonia intracellularis (strain PHE/MN1-00).